The chain runs to 764 residues: Semaphorin-3D (764 aa).

An N-terminal signal peptide occupies residues Met-1–Cys-41. The Sema domain maps to Arg-48 to Leu-535. An intrachain disulfide couples Cys-121 to Cys-132. Asn-143 is a glycosylation site (N-linked (GlcNAc...) asparagine). 3 cysteine pairs are disulfide-bonded: Cys-150-Cys-159, Cys-290-Cys-402, and Cys-314-Cys-362. N-linked (GlcNAc...) asparagine glycosylation is present at Asn-490. Cys-538 and Cys-556 are joined by a disulfide. An N-linked (GlcNAc...) asparagine glycan is attached at Asn-610. The Ig-like C2-type domain occupies Gly-661 to Glu-740. Cys-668 and Cys-733 are disulfide-bonded. The segment at Gln-743–His-764 is disordered.

The protein belongs to the semaphorin family.

It is found in the secreted. Functionally, may play a role in the guidance of several axon pathways. This Danio rerio (Zebrafish) protein is Semaphorin-3D (sema3d).